The following is a 90-amino-acid chain: Acylphosphatase (90 aa).

The Acylphosphatase-like domain occupies 3–90; that stretch reads KKQFVVYGIV…HSFGLFSVEH (88 aa). Active-site residues include Arg18 and Asn36.

The protein belongs to the acylphosphatase family.

The catalysed reaction is an acyl phosphate + H2O = a carboxylate + phosphate + H(+). The protein is Acylphosphatase (acyP) of Mannheimia succiniciproducens (strain KCTC 0769BP / MBEL55E).